A 352-amino-acid polypeptide reads, in one-letter code: tRNA (guanine-N(1)-)-methyltransferase (352 aa).

S-adenosyl-L-methionine is bound by residues glycine 109 and 129–134 (IGDYVL).

Belongs to the RNA methyltransferase TrmD family. Homodimer.

The protein localises to the cytoplasm. It carries out the reaction guanosine(37) in tRNA + S-adenosyl-L-methionine = N(1)-methylguanosine(37) in tRNA + S-adenosyl-L-homocysteine + H(+). In terms of biological role, specifically methylates guanosine-37 in various tRNAs. This Chlamydia trachomatis serovar A (strain ATCC VR-571B / DSM 19440 / HAR-13) protein is tRNA (guanine-N(1)-)-methyltransferase.